The sequence spans 125 residues: Large ribosomal subunit protein bL21 (125 aa).

The protein belongs to the bacterial ribosomal protein bL21 family. As to quaternary structure, part of the 50S ribosomal subunit. Contacts protein L20.

Functionally, this protein binds to 23S rRNA in the presence of protein L20. The protein is Large ribosomal subunit protein bL21 of Synechococcus sp. (strain CC9902).